The sequence spans 213 residues: Guanylate kinase (213 aa).

Positions G6–S186 constitute a Guanylate kinase-like domain. Position 13–20 (S13–S20) interacts with ATP.

It belongs to the guanylate kinase family.

It is found in the cytoplasm. It catalyses the reaction GMP + ATP = GDP + ADP. Essential for recycling GMP and indirectly, cGMP. The polypeptide is Guanylate kinase (Ruegeria pomeroyi (strain ATCC 700808 / DSM 15171 / DSS-3) (Silicibacter pomeroyi)).